Consider the following 1085-residue polypeptide: Tudor domain-containing protein 7B (1085 aa).

Positions 3–76 constitute an HTH OST-type 1 domain; it reads DEELVKKMVR…SGEVMCHATT (74 aa). 3 disordered regions span residues 112-183, 200-228, and 297-341; these read APLV…PEKR, RNPQHINVPSNLNENTTPPKPRLPHSAPY, and PAKE…KALS. The segment covering 203-216 has biased composition (polar residues); that stretch reads QHINVPSNLNENTT. Positions 229 to 299 constitute an HTH OST-type 2 domain; that stretch reads SPKLVQSRLQ…PQELLLYPAK (71 aa). The span at 322-335 shows a compositional bias: polar residues; the sequence is TQRPSLTAKSNTPE. Positions 340–410 constitute an HTH OST-type 3 domain; it reads LSPDLKQKLG…PKRAILYAKV (71 aa). Tudor domains lie at 496–554 and 686–743; these read SPSP…FYRL and RPFC…LLRD. Residues 843–853 show a composition bias toward polar residues; it reads NVPTATQTSSL. The tract at residues 843-888 is disordered; sequence NVPTATQTSSLKTDRGDKALHTPKKTSPPLGSKSTPAGSPPERLSL.

The protein resides in the cytoplasm. In terms of biological role, component of specific cytoplasmic RNA granules involved in post-transcriptional regulation of specific genes: probably acts by binding to specific mRNAs and regulating their translation. Probably required during spermatogenesis. This Danio rerio (Zebrafish) protein is Tudor domain-containing protein 7B (tdrd7b).